Reading from the N-terminus, the 705-residue chain is Elongation factor G (705 aa).

In terms of domain architecture, tr-type G spans 8–294; that stretch reads ELCRNFGIMA…SVIDYLPSPL (287 aa). GTP-binding positions include 17–24, 92–96, and 146–149; these read AHIDAGKT, DTPGH, and NKMD.

Belongs to the TRAFAC class translation factor GTPase superfamily. Classic translation factor GTPase family. EF-G/EF-2 subfamily.

Its subcellular location is the cytoplasm. Functionally, catalyzes the GTP-dependent ribosomal translocation step during translation elongation. During this step, the ribosome changes from the pre-translocational (PRE) to the post-translocational (POST) state as the newly formed A-site-bound peptidyl-tRNA and P-site-bound deacylated tRNA move to the P and E sites, respectively. Catalyzes the coordinated movement of the two tRNA molecules, the mRNA and conformational changes in the ribosome. In Cereibacter sphaeroides (strain ATCC 17023 / DSM 158 / JCM 6121 / CCUG 31486 / LMG 2827 / NBRC 12203 / NCIMB 8253 / ATH 2.4.1.) (Rhodobacter sphaeroides), this protein is Elongation factor G.